Here is an 872-residue protein sequence, read N- to C-terminus: DNA mismatch repair protein MutS (872 aa).

ATP is bound at residue 602–609 (GPNMSGKS).

This sequence belongs to the DNA mismatch repair MutS family.

Its function is as follows. This protein is involved in the repair of mismatches in DNA. It is possible that it carries out the mismatch recognition step. This protein has a weak ATPase activity. This is DNA mismatch repair protein MutS from Staphylococcus aureus (strain bovine RF122 / ET3-1).